A 286-amino-acid polypeptide reads, in one-letter code: MNLRDKLDVYLRLARMDRPIGTLLLLWPCLMALLLAAGGMPDLKVLTIFIFGVVVMRACGCIINDYADRDLDAHVDRTKSRPLASGEVTGREALILFAVMGLFAFGLVLMLNPLVVKLSVVGIILTIIYPFTKRFTNMPQMFLGVVWSWSIPMAYAAQTGEVPAEAWWLFAANWCWTVAYDTMYAMVDREDDLKVGIKSTAILFGKYDRQIIGLFQLAALACFITAGWAADRGLVYGLGIITFVGFSMYQQKLIHERERAPCFKAFLNNNWAGLSLFIALGVDYLI.

Helical transmembrane passes span 20 to 40 (IGTL…AGGM), 43 to 63 (LKVL…GCII), 95 to 115 (ILFA…NPLV), 142 to 162 (FLGV…TGEV), 167 to 187 (WWLF…YAMV), 210 to 230 (QIIG…GWAA), and 234 to 254 (LVYG…QKLI).

Belongs to the UbiA prenyltransferase family. It depends on Mg(2+) as a cofactor.

It is found in the cell inner membrane. It carries out the reaction all-trans-octaprenyl diphosphate + 4-hydroxybenzoate = 4-hydroxy-3-(all-trans-octaprenyl)benzoate + diphosphate. The protein operates within cofactor biosynthesis; ubiquinone biosynthesis. In terms of biological role, catalyzes the prenylation of para-hydroxybenzoate (PHB) with an all-trans polyprenyl group. Mediates the second step in the final reaction sequence of ubiquinone-8 (UQ-8) biosynthesis, which is the condensation of the polyisoprenoid side chain with PHB, generating the first membrane-bound Q intermediate 3-octaprenyl-4-hydroxybenzoate. In Shewanella sediminis (strain HAW-EB3), this protein is 4-hydroxybenzoate octaprenyltransferase.